The following is a 408-amino-acid chain: Aspartokinase 2 (408 aa).

7 to 10 is a binding site for ATP; the sequence is KFGG. Residue 25 to 30 coordinates substrate; it reads RAIAEK. Residue S41 participates in ATP binding. Substrate is bound by residues 47–49, E74, 125–126, 150–153, and S153; these read TDE, LE, and RGGS. ATP is bound by residues 173 to 174 and 179 to 184; these read TD and FTTDPR. 2 consecutive ACT domains span residues 264–337 and 343–408; these read VTIY…TESK and IVGS…PSAV. Residues 289–291, Q295, 354–355, 368–369, and 375–376 contribute to the substrate site; these read NVD, VA, LI, and SE.

The protein belongs to the aspartokinase family. In terms of assembly, tetramer consisting of 2 isoforms Alpha (catalytic and regulation) and of a homodimer of 2 isoforms Beta (regulation).

It catalyses the reaction L-aspartate + ATP = 4-phospho-L-aspartate + ADP. It participates in amino-acid biosynthesis; L-lysine biosynthesis via DAP pathway; (S)-tetrahydrodipicolinate from L-aspartate: step 1/4. Its pathway is amino-acid biosynthesis; L-methionine biosynthesis via de novo pathway; L-homoserine from L-aspartate: step 1/3. The protein operates within amino-acid biosynthesis; L-threonine biosynthesis; L-threonine from L-aspartate: step 1/5. With respect to regulation, lysine-sensitive. Regulated by degradation in response to starvation of cells for various nutrients. Ammonium starvation induced the fastest aspartokinase II decline, followed by amino acid starvation and glucose limitation. Catalyzes the phosphorylation of the beta-carboxyl group of aspartic acid with ATP to yield 4-phospho-L-aspartate, which is involved in the branched biosynthetic pathway leading to the biosynthesis of amino acids threonine, isoleucine and methionine. The sequence is that of Aspartokinase 2 (lysC) from Bacillus subtilis (strain 168).